The primary structure comprises 65 residues: TRKQPNCNVYRSHLFFCTRQMDPICGTNGKSYANPCIFCSEKGLRNQKFDFGHWGHCREYTSARS.

Residues 1 to 59 (TRKQPNCNVYRSHLFFCTRQMDPICGTNGKSYANPCIFCSEKGLRNQKFDFGHWGHCRE) enclose the Kazal-like domain. 3 cysteine pairs are disulfide-bonded: C7-C39, C17-C36, and C25-C57. O-linked (GalNAc...) serine glycosylation is present at S12. The O-linked (GalNAc...) serine glycan is linked to S62.

In terms of processing, the identity of the O-linked saccharides are not reported in Ref.1. The O-linked polysaccharides on Ser-12 and Ser-62 are probably the mucin type linked to GalNAc. As to expression, seminal plasma.

The protein resides in the secreted. Functionally, inhibits acrosin. The protein is Seminal plasma acrosin inhibitor A1 of Sus scrofa (Pig).